The chain runs to 179 residues: Ubiquitin-conjugating enzyme E2 C (179 aa).

Residues 1 to 31 (MASQNVDPAAASSVASRKGQESGTSAARGSV) are disordered. The 150-residue stretch at 30–179 (SVGKRLQQEL…YQKQVREKEI (150 aa)) folds into the UBC core domain. Catalysis depends on cysteine 114, which acts as the Glycyl thioester intermediate.

Belongs to the ubiquitin-conjugating enzyme family. As to quaternary structure, component of the APC/C complex. In terms of processing, autoubiquitinated by the APC/C complex, leading to its degradation by the proteasome.

It carries out the reaction S-ubiquitinyl-[E1 ubiquitin-activating enzyme]-L-cysteine + [E2 ubiquitin-conjugating enzyme]-L-cysteine = [E1 ubiquitin-activating enzyme]-L-cysteine + S-ubiquitinyl-[E2 ubiquitin-conjugating enzyme]-L-cysteine.. It catalyses the reaction S-ubiquitinyl-[E1 ubiquitin-activating enzyme]-L-cysteine + [acceptor protein]-L-lysine = [E1 ubiquitin-activating enzyme]-L-cysteine + N(6)-monoubiquitinyl-[acceptor protein]-L-lysine.. It participates in protein modification; protein ubiquitination. Its function is as follows. Catalyzes the covalent attachment of ubiquitin to other proteins. Acts as an essential factor of the anaphase promoting complex/cyclosome (APC/C), a cell cycle-regulated ubiquitin ligase that controls progression through mitosis. Acts by initiating 'Lys-11'-linked polyubiquitin chains on APC/C substrates, leading to the degradation of APC/C substrates by the proteasome and promoting mitotic exit. This Xenopus laevis (African clawed frog) protein is Ubiquitin-conjugating enzyme E2 C (ube2c).